A 282-amino-acid polypeptide reads, in one-letter code: Bis(5'-nucleosyl)-tetraphosphatase, symmetrical (282 aa).

The protein belongs to the Ap4A hydrolase family.

It carries out the reaction P(1),P(4)-bis(5'-adenosyl) tetraphosphate + H2O = 2 ADP + 2 H(+). Hydrolyzes diadenosine 5',5'''-P1,P4-tetraphosphate to yield ADP. The sequence is that of Bis(5'-nucleosyl)-tetraphosphatase, symmetrical from Salmonella arizonae (strain ATCC BAA-731 / CDC346-86 / RSK2980).